A 116-amino-acid chain; its full sequence is Ribosome-binding factor A (116 aa).

This sequence belongs to the RbfA family. Monomer. Binds 30S ribosomal subunits, but not 50S ribosomal subunits or 70S ribosomes.

Its subcellular location is the cytoplasm. Functionally, one of several proteins that assist in the late maturation steps of the functional core of the 30S ribosomal subunit. Associates with free 30S ribosomal subunits (but not with 30S subunits that are part of 70S ribosomes or polysomes). Required for efficient processing of 16S rRNA. May interact with the 5'-terminal helix region of 16S rRNA. The protein is Ribosome-binding factor A of Streptococcus pneumoniae serotype 4 (strain ATCC BAA-334 / TIGR4).